The primary structure comprises 501 residues: Glycerol kinase (501 aa).

T14 contacts ADP. Positions 14, 15, and 16 each coordinate ATP. Position 14 (T14) interacts with sn-glycerol 3-phosphate. R18 contributes to the ADP binding site. Residues R84, E85, Y135, and D244 each coordinate sn-glycerol 3-phosphate. 5 residues coordinate glycerol: R84, E85, Y135, D244, and Q245. Residues T266 and G309 each coordinate ADP. ATP contacts are provided by T266, G309, Q313, and G410. ADP contacts are provided by G410 and N414.

The protein belongs to the FGGY kinase family.

The enzyme catalyses glycerol + ATP = sn-glycerol 3-phosphate + ADP + H(+). Its pathway is polyol metabolism; glycerol degradation via glycerol kinase pathway; sn-glycerol 3-phosphate from glycerol: step 1/1. Inhibited by fructose 1,6-bisphosphate (FBP). Its function is as follows. Key enzyme in the regulation of glycerol uptake and metabolism. Catalyzes the phosphorylation of glycerol to yield sn-glycerol 3-phosphate. This Deinococcus radiodurans (strain ATCC 13939 / DSM 20539 / JCM 16871 / CCUG 27074 / LMG 4051 / NBRC 15346 / NCIMB 9279 / VKM B-1422 / R1) protein is Glycerol kinase.